The chain runs to 419 residues: MLAAAFADSNSSSMNVSFAHLHFAGGYLPSDSQDWRTIIPALLVAVCLVGFVGNLCVIGILLHNAWKGKPSMIHSLILNLSLADLSLLLFSAPIRATAYSKSVWDLGWFVCKSSDWFIHTCMAAKSLTIVVVAKVCFMYASDPAKQVSIHNYTIWSVLVAIWTVASLLPLPEWFFSTIRHHEGVEMCLVDVPAVAEEFMSMFGKLYPLLAFGLPLFFASFYFWRAYDQCKKRGTKTQNLRNQIRSKQVTVMLLSIAIISALLWLPEWVAWLWVWHLKAAGPAPPQGFIALSQVLMFSISSANPLIFLVMSEEFREGLKGVWKWMITKKPPTVSESQETPAGNSEGLPDKVPSPESPASIPEKEKPSSPSSGKGKTEKAEIPILPDVEQFWHERDTVPSVQDNDPIPWEHEDQETGEGVK.

At 1 to 41 (MLAAAFADSNSSSMNVSFAHLHFAGGYLPSDSQDWRTIIPA) the chain is on the extracellular side. Asn-10 and Asn-15 each carry an N-linked (GlcNAc...) asparagine glycan. Residues 42–62 (LLVAVCLVGFVGNLCVIGILL) form a helical membrane-spanning segment. Residues 63–71 (HNAWKGKPS) are Cytoplasmic-facing. A helical membrane pass occupies residues 72–92 (MIHSLILNLSLADLSLLLFSA). Over 93–116 (PIRATAYSKSVWDLGWFVCKSSDW) the chain is Extracellular. Cys-111 and Cys-187 are disulfide-bonded. A helical membrane pass occupies residues 117 to 137 (FIHTCMAAKSLTIVVVAKVCF). The Cytoplasmic segment spans residues 138–153 (MYASDPAKQVSIHNYT). A helical membrane pass occupies residues 154 to 174 (IWSVLVAIWTVASLLPLPEWF). Topologically, residues 175–201 (FSTIRHHEGVEMCLVDVPAVAEEFMSM) are extracellular. Residues 202–222 (FGKLYPLLAFGLPLFFASFYF) form a helical membrane-spanning segment. Residues 223–252 (WRAYDQCKKRGTKTQNLRNQIRSKQVTVML) are Cytoplasmic-facing. A helical membrane pass occupies residues 253 to 273 (LSIAIISALLWLPEWVAWLWV). The Extracellular segment spans residues 274–286 (WHLKAAGPAPPQG). Residues 287–307 (FIALSQVLMFSISSANPLIFL) form a helical membrane-spanning segment. Residues 308 to 419 (VMSEEFREGL…EDQETGEGVK (112 aa)) are Cytoplasmic-facing. Positions 330 to 419 (PTVSESQETP…EDQETGEGVK (90 aa)) are disordered. Polar residues predominate over residues 332–341 (VSESQETPAG). Residues 410 to 419 (EDQETGEGVK) are compositionally biased toward acidic residues.

It belongs to the G-protein coupled receptor 1 family. In terms of tissue distribution, high expression in the spinal cord.

It localises to the cell membrane. Its function is as follows. Proton-sensing G-protein coupled receptor. In Homo sapiens (Human), this protein is G-protein coupled receptor 151 (GPR151).